A 262-amino-acid chain; its full sequence is Homeobox protein Nkx-6.3 (262 aa).

The homeobox DNA-binding region spans 140–199; sequence KKHTRPTFTGHQIFALEKTFEQTKYLAGPERARLAYSLGMTESQVKVWFQNRRTKWRKKS. The interval 197-237 is disordered; sequence KKSALEPSSSTPRAPGGASGDRAASENEDDEYNKPLDPDSD.

In terms of tissue distribution, expressed in the developing CNS and gastro-intestinal tract.

It localises to the nucleus. Its function is as follows. Putative transcription factor, which may be involved in patterning of central nervous system and pancreas. The sequence is that of Homeobox protein Nkx-6.3 (Nkx6-3) from Mus musculus (Mouse).